Reading from the N-terminus, the 338-residue chain is Fructose-1,6-bisphosphatase class 1 (338 aa).

4 residues coordinate Mg(2+): E92, D114, L116, and D117. Substrate contacts are provided by residues 117–120 (DGSS) and N210. E284 provides a ligand contact to Mg(2+).

This sequence belongs to the FBPase class 1 family. Homotetramer. Mg(2+) is required as a cofactor.

It is found in the cytoplasm. The catalysed reaction is beta-D-fructose 1,6-bisphosphate + H2O = beta-D-fructose 6-phosphate + phosphate. The protein operates within carbohydrate biosynthesis; gluconeogenesis. The polypeptide is Fructose-1,6-bisphosphatase class 1 (Halorhodospira halophila (strain DSM 244 / SL1) (Ectothiorhodospira halophila (strain DSM 244 / SL1))).